The chain runs to 668 residues: Threonine--tRNA ligase (668 aa).

The TGS domain maps to 1–64 (MSEAIFLTFP…ADGKIEIITR (64 aa)). The catalytic stretch occupies residues 245 to 553 (DHRKLGREMD…LIENFAGHLP (309 aa)). Positions 347, 398, and 530 each coordinate Zn(2+).

Belongs to the class-II aminoacyl-tRNA synthetase family. Homodimer. Zn(2+) is required as a cofactor.

It is found in the cytoplasm. The catalysed reaction is tRNA(Thr) + L-threonine + ATP = L-threonyl-tRNA(Thr) + AMP + diphosphate + H(+). In terms of biological role, catalyzes the attachment of threonine to tRNA(Thr) in a two-step reaction: L-threonine is first activated by ATP to form Thr-AMP and then transferred to the acceptor end of tRNA(Thr). Also edits incorrectly charged L-seryl-tRNA(Thr). This is Threonine--tRNA ligase from Rhizobium leguminosarum bv. trifolii (strain WSM2304).